The following is a 322-amino-acid chain: Cytochrome c biogenesis protein CcsA (322 aa).

Helical transmembrane passes span 2 to 22, 44 to 64, 68 to 88, 143 to 163, 226 to 246, 260 to 274, and 289 to 309; these read LFAT…SIVI, GMIA…LSSG, LSNL…LHTI, MLLS…ILII, VISL…VWAN, TWAF…IYLH, and VASI…LLGI.

It belongs to the CcmF/CycK/Ccl1/NrfE/CcsA family. May interact with Ccs1.

Its subcellular location is the plastid. It localises to the chloroplast thylakoid membrane. Its function is as follows. Required during biogenesis of c-type cytochromes (cytochrome c6 and cytochrome f) at the step of heme attachment. This chain is Cytochrome c biogenesis protein CcsA, found in Brachypodium distachyon (Purple false brome).